A 251-amino-acid chain; its full sequence is UstYa family oxidase phomYb (251 aa).

The segment at 1–47 (MDGYSSKKPRSASPSRSSLTEVEEEERDTLLKTVSLEEEDKSGENGP) is disordered. Residues 58 to 78 (AIGILMLSNIAFIAAFLTVFV) form a helical membrane-spanning segment. Asn-135 carries an N-linked (GlcNAc...) asparagine glycan. 2 consecutive short sequence motifs (HXXHC) follow at residues 160–164 (HQLHC) and 187–191 (HVSHC).

This sequence belongs to the ustYa family.

It is found in the membrane. It functions in the pathway mycotoxin biosynthesis. UstYa family oxidase; part of the gene cluster that mediates the biosynthesis of the phomopsins, a group of hexapeptide mycotoxins which infects lupins and causes lupinosis disease in livestock. Within the pathway, phomYb is probably involved in the construction of the macrocyclic structure of the phomopsins. The pathway starts with the processing of the precursor phomA by several endopeptidases including kexin proteases as well as the cluster-specific S41 family peptidase phomP1 and the oligopeptidase phomG to produce 10 identical copies of the hexapeptide Tyr-Val-Ile-Pro-Ile-Asp. After being excised from the precursor peptide, the core peptides are cyclized and modified post-translationally by enzymes encoded within the gene cluster. The timing and order of proteolysis of the phomA precursor and PTMs are still unknown. Two tyrosinase-like enzymes, phomQ1 and phomQ2, catalyze the chlorination and hydroxylation of Tyr, respectively. PhomYb, is proposed to be involved in the construction of the macrocyclic structure. The other 4 ustYa family proteins may be involved in PTMs that generate the unique structure of phomopsin A. PhomYa is required for the hydroxylation of C-beta of Tyr. PhomYc, phomYd, and phomYe are responsible for the biosynthesis of 2,3-dehydroisoleucine (dIle), 2,3-dehydroaspartic acid (dAsp), and 3,4-dehydroproline (dPro), respectively. While dIle formation by phomYc is indispensable for the installation of dAsp by phomYd, the order of the other PTMs have not been elucidated yet. Most of the biosynthetic enzymes likely have broad substrate specificity, and thus, there might be a metabolic grid from a precursor to phomopsin A. The enzyme(s) responsible for the biosynthesis of 3,4-dehydrovaline (dVal) have also not been identified yet. Finally, phomM acts as an S-adenosylmethionine-dependent alpha-N-methyltransferase that catalyzes two successive N-methylation reactions, converting N-desmethyl-phomopsin A to phomopsin A and phomopsin A further to an N,N-dimethylated congener called phomopsin E. This is UstYa family oxidase phomYb from Diaporthe leptostromiformis (Lupinosis disease fungus).